The following is a 131-amino-acid chain: Bacteriohemerythrin (131 aa).

8 residues coordinate Fe cation: His20, Glu23, His56, Glu60, His75, His79, His117, and Asp122.

Belongs to the hemerythrin family. Monomer.

Oxygen-binding protein. May be involved in a storage mechanism or for delivery to oxygen-requiring enzymes. The oxygen-binding site contains two iron atoms. The sequence is that of Bacteriohemerythrin from Aquifex aeolicus (strain VF5).